The chain runs to 188 residues: Deoxycytidylate deaminase (188 aa).

The 171-residue stretch at 1 to 171 (MKASTVLQIA…DILRNAGIEV (171 aa)) folds into the CMP/dCMP-type deaminase domain. Zn(2+) contacts are provided by Cys19, Cys49, His94, Glu102, and His104. The active-site Proton donor is Glu106. The Zn(2+) site is built by Cys132 and Cys135.

The protein belongs to the cytidine and deoxycytidylate deaminase family. Homohexamer. Zn(2+) is required as a cofactor.

It carries out the reaction dCMP + H2O + H(+) = dUMP + NH4(+). Allosteric enzyme whose activity is greatly influenced by the end products of its metabolic pathway, dCTP and dTTP. Functionally, supplies the nucleotide substrate for thymidylate synthetase. The polypeptide is Deoxycytidylate deaminase (CD) (Enterobacteria phage T2 (Bacteriophage T2)).